Reading from the N-terminus, the 377-residue chain is Protein RecA (377 aa).

ATP is bound at residue 82–89; that stretch reads GPESSGKT. Residues 345–377 form a disordered region; sequence EGSEVSANSMRPLASAARQASSRPNLSQVSANG. Residues 362–377 are compositionally biased toward polar residues; the sequence is RQASSRPNLSQVSANG.

The protein belongs to the RecA family.

It localises to the cytoplasm. In terms of biological role, can catalyze the hydrolysis of ATP in the presence of single-stranded DNA, the ATP-dependent uptake of single-stranded DNA by duplex DNA, and the ATP-dependent hybridization of homologous single-stranded DNAs. It interacts with LexA causing its activation and leading to its autocatalytic cleavage. The polypeptide is Protein RecA (Prochlorococcus marinus (strain NATL2A)).